The primary structure comprises 355 residues: Peptide chain release factor 1 (355 aa).

Gln-233 carries the N5-methylglutamine modification. A compositionally biased stretch (basic and acidic residues) spans 280–293 (ERRKKEQERADSRR). Positions 280–308 (ERRKKEQERADSRRGQVGSGDRSERIRTY) are disordered.

Belongs to the prokaryotic/mitochondrial release factor family. In terms of processing, methylated by PrmC. Methylation increases the termination efficiency of RF1.

The protein resides in the cytoplasm. Its function is as follows. Peptide chain release factor 1 directs the termination of translation in response to the peptide chain termination codons UAG and UAA. The sequence is that of Peptide chain release factor 1 from Rickettsia felis (strain ATCC VR-1525 / URRWXCal2) (Rickettsia azadi).